We begin with the raw amino-acid sequence, 450 residues long: tRNA modification GTPase MnmE (450 aa).

Residues arginine 23, glutamate 79, and lysine 118 each contribute to the (6S)-5-formyl-5,6,7,8-tetrahydrofolate site. The 161-residue stretch at 214–374 (GITLILVGKP…LKEHILNKVG (161 aa)) folds into the TrmE-type G domain. Asparagine 224 serves as a coordination point for K(+). GTP contacts are provided by residues 224–229 (NAGKSS), 243–249 (TSIAGTT), and 268–271 (DTAG). Residue serine 228 coordinates Mg(2+). Threonine 243, isoleucine 245, and threonine 248 together coordinate K(+). Threonine 249 is a binding site for Mg(2+). Residue lysine 450 coordinates (6S)-5-formyl-5,6,7,8-tetrahydrofolate.

This sequence belongs to the TRAFAC class TrmE-Era-EngA-EngB-Septin-like GTPase superfamily. TrmE GTPase family. In terms of assembly, homodimer. Heterotetramer of two MnmE and two MnmG subunits. The cofactor is K(+).

The protein resides in the cytoplasm. Its function is as follows. Exhibits a very high intrinsic GTPase hydrolysis rate. Involved in the addition of a carboxymethylaminomethyl (cmnm) group at the wobble position (U34) of certain tRNAs, forming tRNA-cmnm(5)s(2)U34. This Francisella tularensis subsp. holarctica (strain FTNF002-00 / FTA) protein is tRNA modification GTPase MnmE.